We begin with the raw amino-acid sequence, 204 residues long: Small ribosomal subunit protein uS4 (204 aa).

A disordered region spans residues 1 to 46; it reads MSKRHSSKYKIDRRMGENIWGRPKSPVNRREYGPGQHGQRRRSKIS. Positions 94–157 constitute an S4 RNA-binding domain; that stretch reads RRLDMIVYRA…QEMALVLEAQ (64 aa).

The protein belongs to the universal ribosomal protein uS4 family. Part of the 30S ribosomal subunit. Contacts protein S5. The interaction surface between S4 and S5 is involved in control of translational fidelity.

Functionally, one of the primary rRNA binding proteins, it binds directly to 16S rRNA where it nucleates assembly of the body of the 30S subunit. Its function is as follows. With S5 and S12 plays an important role in translational accuracy. This Zymomonas mobilis subsp. mobilis (strain ATCC 31821 / ZM4 / CP4) protein is Small ribosomal subunit protein uS4.